A 183-amino-acid polypeptide reads, in one-letter code: NRR repressor homolog 1 (183 aa).

Disordered regions lie at residues Met-1–Gly-40 and Asn-66–Gln-183. The span at Glu-31–Gly-40 shows a compositional bias: acidic residues. Residues Gly-70 to Ala-79 are compositionally biased toward gly residues. Residues Phe-101–Ala-115 are compositionally biased toward acidic residues. The span at Ala-135–Ala-145 shows a compositional bias: basic and acidic residues. The span at Ala-150–Glu-161 shows a compositional bias: acidic residues. Residues Val-163 to Gln-183 show a composition bias toward basic and acidic residues.

Belongs to the NPR1-interactor family. Interacts with NPR1/NH1. Interacts with NPR3/NH3.

It localises to the nucleus. In terms of biological role, binds to and represses NPR1/NH1-mediated transcriptional activation of LG2 in vitro. The sequence is that of NRR repressor homolog 1 from Oryza sativa subsp. japonica (Rice).